The chain runs to 215 residues: Ubiquitin-conjugating enzyme E2 S (215 aa).

One can recognise a UBC core domain in the interval aspartate 9–serine 155. Cysteine 93 acts as the Glycyl thioester intermediate in catalysis. The disordered stretch occupies residues isoleucine 159–leucine 215. A compositionally biased stretch (low complexity) spans serine 161 to serine 190.

The protein belongs to the ubiquitin-conjugating enzyme family.

It catalyses the reaction S-ubiquitinyl-[E1 ubiquitin-activating enzyme]-L-cysteine + [E2 ubiquitin-conjugating enzyme]-L-cysteine = [E1 ubiquitin-activating enzyme]-L-cysteine + S-ubiquitinyl-[E2 ubiquitin-conjugating enzyme]-L-cysteine.. The protein operates within protein modification; protein ubiquitination. Functionally, catalyzes the covalent attachment of ubiquitin to other proteins. Acts as an essential factor of the anaphase promoting complex/cyclosome (APC/C), a cell cycle-regulated ubiquitin ligase that controls progression through mitosis. Acts by specifically elongating polyubiquitin chains initiated by the E2 enzyme ubch10 on APC/C substrates, enhancing the degradation of APC/C substrates by the proteasome and promoting mitotic exit. The protein is Ubiquitin-conjugating enzyme E2 S (ube2s) of Dictyostelium discoideum (Social amoeba).